Consider the following 613-residue polypeptide: Glucose-6-phosphate isomerase 1, chloroplastic (613 aa).

The segment covering 1–14 (MASLSGLYSSSPSL) has biased composition (low complexity). The segment at 1-21 (MASLSGLYSSSPSLKPAKNHS) is disordered. The transit peptide at 1 to 48 (MASLSGLYSSSPSLKPAKNHSFKALPAQSRDSFSFPHTSKPTNLPLTL) directs the protein to the chloroplast. The active-site Proton donor is Glu392. Catalysis depends on residues His421 and Lys526. Ser595 bears the Phosphoserine mark.

The protein belongs to the GPI family.

It is found in the plastid. Its subcellular location is the chloroplast stroma. The catalysed reaction is alpha-D-glucose 6-phosphate = beta-D-fructose 6-phosphate. The protein operates within carbohydrate degradation; glycolysis; D-glyceraldehyde 3-phosphate and glycerone phosphate from D-glucose: step 2/4. It functions in the pathway carbohydrate biosynthesis; gluconeogenesis. Its activity is regulated as follows. Inhibited by glycerol-3-P (G3P). Promotes the synthesis of starch in leaves. This Arabidopsis thaliana (Mouse-ear cress) protein is Glucose-6-phosphate isomerase 1, chloroplastic (PGI1).